The chain runs to 701 residues: Elongation factor G (701 aa).

A tr-type G domain is found at 11–287; that stretch reads SRVRNFGIMA…AVVDYLPSPL (277 aa). GTP contacts are provided by residues 20–27, 84–88, and 138–141; these read AHIDAGKT, DTPGH, and NKMD.

This sequence belongs to the TRAFAC class translation factor GTPase superfamily. Classic translation factor GTPase family. EF-G/EF-2 subfamily.

Its subcellular location is the cytoplasm. Functionally, catalyzes the GTP-dependent ribosomal translocation step during translation elongation. During this step, the ribosome changes from the pre-translocational (PRE) to the post-translocational (POST) state as the newly formed A-site-bound peptidyl-tRNA and P-site-bound deacylated tRNA move to the P and E sites, respectively. Catalyzes the coordinated movement of the two tRNA molecules, the mRNA and conformational changes in the ribosome. The protein is Elongation factor G (fusA) of Mycobacterium tuberculosis (strain CDC 1551 / Oshkosh).